A 2564-amino-acid chain; its full sequence is Highly reducing polyketide synthase 40 (2564 aa).

The Ketosynthase family 3 (KS3) domain occupies 8–432; it reads PEPIAIIGMS…GTNAHVIVDR (425 aa). Active-site for beta-ketoacyl synthase activity residues include C181, H317, and H358. Residues 435–482 form a disordered region; the sequence is EHNHSNGTNGTNGTHHHNGTNGSNGNGTNGTNGTNGTDGFHDTESISD. Positions 439–455 are enriched in low complexity; it reads SNGTNGTNGTHHHNGTN. The span at 473–482 shows a compositional bias: basic and acidic residues; the sequence is GFHDTESISD. The segment at 580-914 is malonyl-CoA:ACP transacylase (MAT) domain; it reads YVFGGQGAQY…SAAENMLRTL (335 aa). Residues 973–1113 form an N-terminal hotdog fold region; sequence HELLGNLSAD…GRIRAVVDQG (141 aa). The interval 973-1280 is dehydratase (DH) domain; it reads HELLGNLSAD…GLRTAQLPSD (308 aa). Residues 973-1283 form the PKS/mFAS DH domain; it reads HELLGNLSAD…TAQLPSDVVN (311 aa). H1005 (proton acceptor; for dehydratase activity) is an active-site residue. The interval 1130 to 1283 is C-terminal hotdog fold; that stretch reads AASVPHHITS…TAQLPSDVVN (154 aa). The Proton donor; for dehydratase activity role is filled by D1199. The interval 1451–1556 is methyltransferase (CMet) domain; sequence LEVGGGTASA…RQLLRPGGTL (106 aa). The interval 1854–2167 is enoyl reductase (ER) domain; sequence GLLETFRWVD…AGKHMGKVIL (314 aa). The tract at residues 2191-2370 is ketoreductase (KR) domain; that stretch reads ATYLLVGGFG…SFAIDVGVVS (180 aa). Residues 2472-2549 enclose the Carrier domain; sequence EALDAVGQAV…ELIHLVAGKS (78 aa). Position 2509 is an O-(pantetheine 4'-phosphoryl)serine (S2509).

It functions in the pathway secondary metabolite biosynthesis. Functionally, highly reducing polyketide synthase; part of the gene cluster that mediates the biosynthesis of the lipopeptides W493 A and B. W493 A and B consist of six amino acid residues D-allo-thr, L-Ala, D-Ala, L-Gln, D-Tyr, and L-Val/L-Ile linked to a 3-hydroxy-4-methyltetradecanoic acid polyketide chain. The biosynthesis starts with formation of the linear polyketide chain by the highly reducing polyketide synthase PKS40. The gene cluster contains a putative acyl-CoA ligase (FPSE_09184) for formation of a CoA thioester polyketide. The thiol bond could be hydrolyzed by the putative thioesterase (FPSE_09186) and then accepted by the first T domain in module 1 of NRPS32. The second T domain is responsible for accepting a threonine, which is adenylated by the A domain and epimerized to the D-allo-threonine formed by the E domain. The five successive modules incorporate Ala, Ala, Gln, Tyr, and Val/Ile into the final product, which is released by cyclization. In Fusarium pseudograminearum (strain CS3096) (Wheat and barley crown-rot fungus), this protein is Highly reducing polyketide synthase 40.